The following is a 908-amino-acid chain: DNA mismatch repair protein MutS (908 aa).

Residue 659 to 666 (GPNMAGKS) coordinates ATP.

This sequence belongs to the DNA mismatch repair MutS family.

Its function is as follows. This protein is involved in the repair of mismatches in DNA. It is possible that it carries out the mismatch recognition step. This protein has a weak ATPase activity. This Parvibaculum lavamentivorans (strain DS-1 / DSM 13023 / NCIMB 13966) protein is DNA mismatch repair protein MutS.